Reading from the N-terminus, the 423-residue chain is Serine--tRNA ligase (423 aa).

228 to 230 (TSE) contributes to the L-serine binding site. 259–261 (RLE) lines the ATP pocket. L-serine is bound at residue glutamate 282. 346 to 349 (EISS) is an ATP binding site. An L-serine-binding site is contributed by serine 384.

The protein belongs to the class-II aminoacyl-tRNA synthetase family. Type-1 seryl-tRNA synthetase subfamily. In terms of assembly, homodimer. The tRNA molecule binds across the dimer.

It is found in the cytoplasm. It catalyses the reaction tRNA(Ser) + L-serine + ATP = L-seryl-tRNA(Ser) + AMP + diphosphate + H(+). The catalysed reaction is tRNA(Sec) + L-serine + ATP = L-seryl-tRNA(Sec) + AMP + diphosphate + H(+). It participates in aminoacyl-tRNA biosynthesis; selenocysteinyl-tRNA(Sec) biosynthesis; L-seryl-tRNA(Sec) from L-serine and tRNA(Sec): step 1/1. Its function is as follows. Catalyzes the attachment of serine to tRNA(Ser). Is also able to aminoacylate tRNA(Sec) with serine, to form the misacylated tRNA L-seryl-tRNA(Sec), which will be further converted into selenocysteinyl-tRNA(Sec). In Ehrlichia canis (strain Jake), this protein is Serine--tRNA ligase.